The chain runs to 266 residues: Undecaprenyl-diphosphatase (266 aa).

The next 8 helical transmembrane spans lie at 4–24 (LATI…PVSS), 41–61 (GSAA…LVAY), 79–99 (AVAF…VGAV), 108–128 (LESP…ILAI), 143–163 (MPLR…IPGV), 184–204 (AEFS…YSLW), 220–240 (IGLF…VAIV), and 243–263 (FGFA…LLWL).

The protein belongs to the UppP family.

It localises to the cell inner membrane. It carries out the reaction di-trans,octa-cis-undecaprenyl diphosphate + H2O = di-trans,octa-cis-undecaprenyl phosphate + phosphate + H(+). Functionally, catalyzes the dephosphorylation of undecaprenyl diphosphate (UPP). Confers resistance to bacitracin. The chain is Undecaprenyl-diphosphatase from Sphingopyxis alaskensis (strain DSM 13593 / LMG 18877 / RB2256) (Sphingomonas alaskensis).